Here is a 381-residue protein sequence, read N- to C-terminus: MFTDLPRDLETEILSRVPATSLQKLKPTCKRWYTLFKDPEFLKKHVGRAEREVISLMSLRVYSLSVNLSGIHSSVEMTGMLNSLKDSEDVKISDITECNGLLLCTTDDSRLVVWNPYTGETRWIPYKSNSPYEMYQKFVLGYDNTNKSRYSYKILRCYHGLIDFGYEFEIYEFNSHSWRRFYDNSPNCSFESKGVTLKGNTYWFASDTEGRHIILRFDFATERFGRLSLLYQSGGYVDNVVETGVLSAVREEKLALLYERFDELNDSSEMKIWVTNTKIVEAKDLSWSDFLVVDSSKFMVTRMTNVMSFLVDEEKKMVVVCDTDIDQHMNRFYIVGEDIYKEVYKDIAQGWFSYWPLLISYAPSLVQIQQGKVIPGGKRKR.

In terms of domain architecture, F-box spans M1–H45. 3 Kelch repeats span residues S151 to G199, L229 to E281, and R331 to R379.

The protein is Putative F-box/kelch-repeat protein At3g17570 of Arabidopsis thaliana (Mouse-ear cress).